A 268-amino-acid polypeptide reads, in one-letter code: Exopolysaccharide production negative regulator (268 aa).

The first 22 residues, 1–22, serve as a signal peptide directing secretion; the sequence is MRAGELKSLRVAVLGMSLAVGA.

Functionally, negatively modulates exopolysaccharide (EPS) biosynthesis. This Rhizobium meliloti (strain 1021) (Ensifer meliloti) protein is Exopolysaccharide production negative regulator (exoR).